Here is a 210-residue protein sequence, read N- to C-terminus: MARSKSSGRWLKEHHSDVFVLKAREEGFRSRAVYKLKEIQEKDRIIRPNMTVVELGAAPGGWSQYVAGILNGRGRMIALDILPMDALPDVHFIQGDFREETVLNALYDIIGEGNYVDLVISDMAPNTSGIKSVDQARSMHLVELAADFAQERLVAGGDFLCKVFHGAGFDALFQHLKTQFSTVLTRKPQASRARSQETYLLARGFIRSAE.

S-adenosyl-L-methionine is bound by residues Gly60, Trp62, Asp80, Asp96, and Asp122. The Proton acceptor role is filled by Lys162.

It belongs to the class I-like SAM-binding methyltransferase superfamily. RNA methyltransferase RlmE family.

It is found in the cytoplasm. The enzyme catalyses uridine(2552) in 23S rRNA + S-adenosyl-L-methionine = 2'-O-methyluridine(2552) in 23S rRNA + S-adenosyl-L-homocysteine + H(+). Its function is as follows. Specifically methylates the uridine in position 2552 of 23S rRNA at the 2'-O position of the ribose in the fully assembled 50S ribosomal subunit. The polypeptide is Ribosomal RNA large subunit methyltransferase E (Dichelobacter nodosus (strain VCS1703A)).